The chain runs to 130 residues: Small ribosomal subunit protein uS9 (130 aa).

This sequence belongs to the universal ribosomal protein uS9 family.

The sequence is that of Small ribosomal subunit protein uS9 from Cupriavidus taiwanensis (strain DSM 17343 / BCRC 17206 / CCUG 44338 / CIP 107171 / LMG 19424 / R1) (Ralstonia taiwanensis (strain LMG 19424)).